Consider the following 107-residue polypeptide: UPF0102 protein CTN_0433 (107 aa).

The protein belongs to the UPF0102 family.

The polypeptide is UPF0102 protein CTN_0433 (Thermotoga neapolitana (strain ATCC 49049 / DSM 4359 / NBRC 107923 / NS-E)).